The chain runs to 186 residues: Peptidyl-tRNA hydrolase (186 aa).

A tRNA-binding site is contributed by tyrosine 14. The Proton acceptor role is filled by histidine 19. Residues tyrosine 60 and asparagine 62 each coordinate tRNA.

The protein belongs to the PTH family. Monomer.

The protein resides in the cytoplasm. It carries out the reaction an N-acyl-L-alpha-aminoacyl-tRNA + H2O = an N-acyl-L-amino acid + a tRNA + H(+). Functionally, hydrolyzes ribosome-free peptidyl-tRNAs (with 1 or more amino acids incorporated), which drop off the ribosome during protein synthesis, or as a result of ribosome stalling. Catalyzes the release of premature peptidyl moieties from peptidyl-tRNA molecules trapped in stalled 50S ribosomal subunits, and thus maintains levels of free tRNAs and 50S ribosomes. The polypeptide is Peptidyl-tRNA hydrolase (Mycoplasmopsis pulmonis (strain UAB CTIP) (Mycoplasma pulmonis)).